The primary structure comprises 499 residues: L-arabinose isomerase (499 aa).

Mn(2+) contacts are provided by Glu-306, Glu-333, His-350, and His-449.

The protein belongs to the arabinose isomerase family. Requires Mn(2+) as cofactor.

The enzyme catalyses beta-L-arabinopyranose = L-ribulose. It participates in carbohydrate degradation; L-arabinose degradation via L-ribulose; D-xylulose 5-phosphate from L-arabinose (bacterial route): step 1/3. Functionally, catalyzes the conversion of L-arabinose to L-ribulose. This chain is L-arabinose isomerase, found in Tolumonas auensis (strain DSM 9187 / NBRC 110442 / TA 4).